Consider the following 85-residue polypeptide: Beta-insect depressant toxin BmKITa (85 aa).

The signal sequence occupies residues 1-21 (MKLFLLLLISASMLIDGLVNA). Residues 22–82 (DGYIRGSNGC…TWKSESNTCG (61 aa)) enclose the LCN-type CS-alpha/beta domain. 4 disulfide bridges follow: cysteine 31-cysteine 81, cysteine 35-cysteine 56, cysteine 42-cysteine 63, and cysteine 46-cysteine 65. The residue at position 82 (glycine 82) is a Glycine amide.

As to expression, expressed by the venom gland.

The protein resides in the secreted. Depressant insect beta-toxins cause a transient contraction paralysis followed by a slow flaccid paralysis. They bind voltage-independently at site-4 of sodium channels (Nav) and shift the voltage of activation toward more negative potentials thereby affecting sodium channel activation and promoting spontaneous and repetitive firing. This toxin also displays an evident analgesic effect but is devoid of any toxicity on mice. The sequence is that of Beta-insect depressant toxin BmKITa from Olivierus martensii (Manchurian scorpion).